A 404-amino-acid chain; its full sequence is Multidrug resistance protein MdtG (404 aa).

11 consecutive transmembrane segments (helical) span residues 19 to 39, 56 to 76, 90 to 110, 113 to 133, 144 to 164, 171 to 191, 222 to 242, 254 to 274, 288 to 308, 317 to 337, and 376 to 396; these read LGCF…PLYV, LVFS…GGLA, LGMA…QFLI, ALLG…ATQV, TLST…GLLA, PVFF…FFFI, LFVT…ILTL, IAFI…LSAP, ILIV…FVQT, FLLG…LVYN, and AVFC…WNSL.

The protein belongs to the major facilitator superfamily. DHA1 family. MdtG (TC 2.A.1.2.20) subfamily.

It localises to the cell inner membrane. This chain is Multidrug resistance protein MdtG, found in Salmonella typhi.